The sequence spans 250 residues: ATP synthase subunit a (250 aa).

6 consecutive transmembrane segments (helical) span residues 26 to 46, 84 to 104, 114 to 134, 143 to 163, 193 to 213, and 216 to 236; these read FTNA…FLYL, FFPM…LGMF, IIVT…YGFY, LFVP…IEVI, FVAS…LPLI, and VALT…FAVL.

This sequence belongs to the ATPase A chain family. In terms of assembly, F-type ATPases have 2 components, CF(1) - the catalytic core - and CF(0) - the membrane proton channel. CF(1) has five subunits: alpha(3), beta(3), gamma(1), delta(1), epsilon(1). CF(0) has three main subunits: a(1), b(2) and c(9-12). The alpha and beta chains form an alternating ring which encloses part of the gamma chain. CF(1) is attached to CF(0) by a central stalk formed by the gamma and epsilon chains, while a peripheral stalk is formed by the delta and b chains.

The protein resides in the cell inner membrane. Its function is as follows. Key component of the proton channel; it plays a direct role in the translocation of protons across the membrane. The protein is ATP synthase subunit a of Sinorhizobium fredii (strain NBRC 101917 / NGR234).